The primary structure comprises 593 residues: UvrABC system protein C (593 aa).

A GIY-YIG domain is found at 14-91; it reads DSPGCYLHKD…IQENMPKYNI (78 aa). The region spanning 196–231 is the UVR domain; sequence NKIVNGLTEKMKSAAMTMEFERAAEYRDLIEAISLL.

The protein belongs to the UvrC family. In terms of assembly, interacts with UvrB in an incision complex.

It is found in the cytoplasm. Functionally, the UvrABC repair system catalyzes the recognition and processing of DNA lesions. UvrC both incises the 5' and 3' sides of the lesion. The N-terminal half is responsible for the 3' incision and the C-terminal half is responsible for the 5' incision. This Streptococcus agalactiae serotype Ia (strain ATCC 27591 / A909 / CDC SS700) protein is UvrABC system protein C.